The following is a 268-amino-acid chain: LOB domain-containing protein 13 (268 aa).

Residues 51 to 152 form the LOB domain; that stretch reads TPCAACKLLR…SELTTVRTEI (102 aa). The interval 191–268 is disordered; that stretch reads LLPPPPPPPP…SSDNNVHYFD (78 aa). 2 stretches are compositionally biased toward pro residues: residues 192 to 205 and 212 to 222; these read LPPP…PRPP and PAPPPTPPVSL. Over residues 223–243 the composition is skewed to low complexity; it reads PSPSMVVSSSSSSNSSATNSM. Polar residues predominate over residues 250–268; it reads STAGYSNSLSSDNNVHYFD.

This sequence belongs to the LOB domain-containing protein family. Expressed in shoots and roots and at low levels in flowers, but not in leaves or inflorescence stems.

This is LOB domain-containing protein 13 (LBD13) from Arabidopsis thaliana (Mouse-ear cress).